The following is a 346-amino-acid chain: L-threonine dehydratase catabolic TdcB (346 aa).

59 to 60 serves as a coordination point for AMP; that stretch reads FT. K64 bears the N6-(pyridoxal phosphate)lysine mark. AMP contacts are provided by residues Q94, 125–126, and N321; that span reads GY.

It belongs to the serine/threonine dehydratase family. In terms of assembly, in the native structure, TdcB is in a dimeric form, whereas in the TdcB-AMP complex, it exists in a tetrameric form (dimer of dimers). Pyridoxal 5'-phosphate serves as cofactor.

The enzyme catalyses L-threonine = 2-oxobutanoate + NH4(+). It functions in the pathway amino-acid degradation; L-threonine degradation via propanoate pathway; propanoate from L-threonine: step 1/4. With respect to regulation, each protein molecule can bind up to four molecules of AMP, which act as an allosteric activator to the enzyme. In terms of biological role, catalyzes the anaerobic formation of alpha-ketobutyrate and ammonia from threonine in a two-step reaction. The first step involved a dehydration of threonine and a production of enamine intermediates (aminocrotonate), which tautomerizes to its imine form (iminobutyrate). Both intermediates are unstable and short-lived. The second step is the nonenzymatic hydrolysis of the enamine/imine intermediates to form 2-ketobutyrate and free ammonia. In the low water environment of the cell, the second step is accelerated by RidA. The polypeptide is L-threonine dehydratase catabolic TdcB (tdcB) (Staphylococcus aureus (strain bovine RF122 / ET3-1)).